Reading from the N-terminus, the 99-residue chain is uncharacterized protein (99 aa).

This is an uncharacterized protein from Vibrio alginolyticus.